The sequence spans 493 residues: Cytochrome P450 monooxygenase mfmF (493 aa).

2 helical membrane passes run 3 to 23 and 301 to 321; these read SLIPLTAIVLVLVAILHRLFF and VLFAGADSTAVMLATILFHLV. Cysteine 440 lines the heme pocket.

This sequence belongs to the cytochrome P450 family. Requires heme as cofactor.

The protein resides in the membrane. It functions in the pathway secondary metabolite biosynthesis; terpenoid biosynthesis. Cytochrome P450 monooxygenase; part of the gene cluster that mediates the biosynthesis of the phthalide-terpenoid hybrid 11'-O-desmethylfendlerol. Within the pathway, mfmF catalyzes C-3 hydroxylation of 5-hydroxy-4-(hydroxymethyl)-7-methoxy-6-methylphthalide to yield cyclopolic acid. The biosynthesis of 11'-O-desmethylfendlerol begins with the NR-PKS mfmB that forms 3,5-dimethylorsellinic acid (DMOA), which is then transformed into the phthalide 5,7-dihydroxy-4-(hydroxymethyl)-6-methylphthalide by the cytochrome P450 monooxygenase mfmA and the hydrolase mfmC. Subsequently, the methyltransferase mfmE catalyzes 7-O-methylation to yield 5-hydroxy-4-(hydroxymethyl)-7-methoxy-6-methylphthalide, which undergoes C-3 hydroxylation by the cytochrome P450 monooxygenase mfmF. The resultant cyclopolic acid (2,5-dihydroxy-4-(hydroxymethyl)-7-methoxy-6-methylphthalide) is then farnesylated by the DMATS-type prenyltransferase mfmD to afford 5-O-farnesylcyclopolic acid. Finally, the Pyr4-family terpene cyclase mfmH cyclizes the farnesyl moiety of 5-O-farnesylcyclopolic acid into a drimane-like structure, thus completing the biosynthesis of 11'-O-desmethylfendlerol. The protein is Cytochrome P450 monooxygenase mfmF of Annulohypoxylon moriforme (Filamentous fungus).